Here is a 338-residue protein sequence, read N- to C-terminus: Nucleoid-associated protein CGSHiGG_07705 (338 aa).

This sequence belongs to the YejK family.

Its subcellular location is the cytoplasm. The protein localises to the nucleoid. The protein is Nucleoid-associated protein CGSHiGG_07705 of Haemophilus influenzae (strain PittGG).